Here is a 167-residue protein sequence, read N- to C-terminus: Caffeine dehydrogenase subunit gamma (167 aa).

Positions 4-80 constitute a 2Fe-2S ferredoxin-type domain; the sequence is HVISLTVNGQ…GHSIRTVEAL (77 aa). 4 residues coordinate [2Fe-2S] cluster: Cys42, Cys47, Cys50, and Cys62.

In terms of assembly, heterotrimer composed of an alpha (CdhA), a beta (CdhB) and a gamma (CdhC) subunit.

It catalyses the reaction caffeine + a ubiquinone + H2O = 1,3,7-trimethylurate + a ubiquinol. It carries out the reaction ubiquinone-0 + caffeine + H2O = ubiquinol-0 + 1,3,7-trimethylurate. The enzyme catalyses theobromine + a ubiquinone + H2O = 3,7-dimethylurate + a ubiquinol. In terms of biological role, component of the caffeine dehydrogenase complex that catalyzes the hydrolytical oxidation of 1,3,7-trimethylxanthine (caffeine) by incorporation of an oxygen atom originating from a water molecule into position C-8 to produce 1,3,7-trimethyluric acid (TMU). Coenzyme Q0 (ubiquinone-0) is the preferred electron acceptor and, to a lesser extent, coenzyme Q2 (ubiquinone-2) can also be used, but oxygen and NAD(P)(+) cannot. Is involved in a caffeine degradation pathway that allows Pseudomonas sp. strain CBB1 to grow on caffeine as the sole carbon and nitrogen source. Is also active with theobromine as substrate, but shows a very poor activity with theophylline and is not active with xanthine, 3-methylxanthine, 7-methylxanthine, TMU, and 3,7-dimethylurate. The protein is Caffeine dehydrogenase subunit gamma of Pseudomonas sp. (strain CBB1).